Reading from the N-terminus, the 741-residue chain is NAD(P)H-quinone oxidoreductase subunit 5, chloroplastic (741 aa).

16 consecutive transmembrane segments (helical) span residues 9 to 29 (WIIP…LLLF), 40 to 60 (WAFQ…NLSI), 89 to 109 (IDPL…LVLI), 125 to 145 (FAYM…SNLI), 147 to 167 (IYIF…FWFT), 185 to 205 (GDFG…SFEF), 219 to 239 (NQVN…GAIA), 258 to 278 (TPIS…FLVA), 289 to 311 (HIMN…LALA), 327 to 347 (LGYM…FHLI), 354 to 374 (ALLF…VGYC), 396 to 416 (NSFL…CFWS), 425 to 445 (WLYS…TAFY), 549 to 569 (LFPI…GIPL), 605 to 625 (LFSV…YKPV), and 721 to 741 (YLFF…FLNL).

It belongs to the complex I subunit 5 family. As to quaternary structure, NDH is composed of at least 16 different subunits, 5 of which are encoded in the nucleus.

The protein resides in the plastid. The protein localises to the chloroplast thylakoid membrane. It catalyses the reaction a plastoquinone + NADH + (n+1) H(+)(in) = a plastoquinol + NAD(+) + n H(+)(out). It carries out the reaction a plastoquinone + NADPH + (n+1) H(+)(in) = a plastoquinol + NADP(+) + n H(+)(out). Functionally, NDH shuttles electrons from NAD(P)H:plastoquinone, via FMN and iron-sulfur (Fe-S) centers, to quinones in the photosynthetic chain and possibly in a chloroplast respiratory chain. The immediate electron acceptor for the enzyme in this species is believed to be plastoquinone. Couples the redox reaction to proton translocation, and thus conserves the redox energy in a proton gradient. The sequence is that of NAD(P)H-quinone oxidoreductase subunit 5, chloroplastic (ndhF) from Symphyotrichum cordifolium (Heart-leaved aster).